The chain runs to 261 residues: Thiazole synthase (261 aa).

K95 acts as the Schiff-base intermediate with DXP in catalysis. 1-deoxy-D-xylulose 5-phosphate is bound by residues G156, 182–183, and 204–205; these read AG and NT.

Belongs to the ThiG family. In terms of assembly, homotetramer. Forms heterodimers with either ThiH or ThiS.

Its subcellular location is the cytoplasm. The enzyme catalyses [ThiS sulfur-carrier protein]-C-terminal-Gly-aminoethanethioate + 2-iminoacetate + 1-deoxy-D-xylulose 5-phosphate = [ThiS sulfur-carrier protein]-C-terminal Gly-Gly + 2-[(2R,5Z)-2-carboxy-4-methylthiazol-5(2H)-ylidene]ethyl phosphate + 2 H2O + H(+). Its pathway is cofactor biosynthesis; thiamine diphosphate biosynthesis. Functionally, catalyzes the rearrangement of 1-deoxy-D-xylulose 5-phosphate (DXP) to produce the thiazole phosphate moiety of thiamine. Sulfur is provided by the thiocarboxylate moiety of the carrier protein ThiS. In vitro, sulfur can be provided by H(2)S. The protein is Thiazole synthase of Pectobacterium atrosepticum (strain SCRI 1043 / ATCC BAA-672) (Erwinia carotovora subsp. atroseptica).